Consider the following 171-residue polypeptide: Zinc finger A20 and AN1 domain-containing stress-associated protein 8 (171 aa).

The A20-type zinc-finger motif lies at 11–45; that stretch reads PEGPILCINNCGFFGSAATMNMCSKCHKEMIMKQE. Zn(2+)-binding residues include Cys-17, Cys-21, Cys-33, Cys-36, Cys-112, Cys-115, Cys-126, Cys-128, Cys-133, His-136, His-142, and Cys-144. The segment at 106 to 152 adopts an AN1-type zinc-finger fold; the sequence is REGPNRCSTCRKRVGLTGFNCRCGNLYCAMHRYSDKHDCQFDYRTAA.

May be involved in environmental stress response. The protein is Zinc finger A20 and AN1 domain-containing stress-associated protein 8 (SAP8) of Oryza sativa subsp. indica (Rice).